A 456-amino-acid polypeptide reads, in one-letter code: MIKVRFAPSPTGYIHIGNTRIALFNWLYAQANNGTFILRYDDTDLERSKQEYIDGIMTDLEWLDIKPDEIHHQSKRFSRYDKVAETLKERGLLYPCYETVEELGRHRKIQLSRKLPPVYDRRALKLTKEDKRLLESQGRKPHWRFLLPNFESNPFQIKRTEISWDDIVKGKQTIDLASISDPVLIREDGSYLYTLPSVIDDIDMAITHIIRGEDHITNTGAQITIFEALNAKLPAFGHINLLTTVSGQGLSKRNSDLSICSLREEGFESMAVRCLSVLTGTSKNIEAHRDQKALLEHFSLQNTSKSAAKFDITDLISLNSHFVHELTYEEVKTRLEKLSICGEKAEYFWNTIRDNIDKVNDAALWWEIIHSDQSFDAVSFEDRAFLQQSVDLLPEGSLNDESWKIWTTALKEKTDRKGKALFMSLRLALTGRQHGPEMGKLLPLLGREKIINRLTI.

The short motif at 8–18 (PSPTGYIHIGN) is the 'HIGH' region element. A 'KMSKS' region motif is present at residues 249–253 (GLSKR). Lys-252 contributes to the ATP binding site.

It belongs to the class-I aminoacyl-tRNA synthetase family. Glutamate--tRNA ligase type 1 subfamily. Monomer.

Its subcellular location is the cytoplasm. The enzyme catalyses tRNA(Glu) + L-glutamate + ATP = L-glutamyl-tRNA(Glu) + AMP + diphosphate. Its function is as follows. Catalyzes the attachment of glutamate to tRNA(Glu) in a two-step reaction: glutamate is first activated by ATP to form Glu-AMP and then transferred to the acceptor end of tRNA(Glu). The chain is Glutamate--tRNA ligase 2 from Bartonella bacilliformis (strain ATCC 35685 / KC583 / Herrer 020/F12,63).